Consider the following 237-residue polypeptide: AA9 family lytic polysaccharide monooxygenase C (237 aa).

The signal sequence occupies residues 1 to 15 (MKVLAPLILAGAASA). Cu(2+) is bound by residues His16 and His99. Cystine bridges form between Cys54-Cys185 and Cys155-Cys237. Asn112 carries an N-linked (GlcNAc...) asparagine glycan. O2 contacts are provided by His171 and Gln180. Tyr182 provides a ligand contact to Cu(2+).

It belongs to the polysaccharide monooxygenase AA9 family. Requires Cu(2+) as cofactor.

Its subcellular location is the secreted. It carries out the reaction [(1-&gt;4)-beta-D-glucosyl]n+m + reduced acceptor + O2 = 4-dehydro-beta-D-glucosyl-[(1-&gt;4)-beta-D-glucosyl]n-1 + [(1-&gt;4)-beta-D-glucosyl]m + acceptor + H2O.. With respect to regulation, is able to utilize various natural phenolic compounds as reducing agents. Most of these reducing agents are present in plants, either free or as lignin building blocks, such as sinapic acid, or as flavonoids such as catechin and dopamine. Phenolic compounds with 1,2-benzenediol and 1,2,3-benzenetriol moieties yield the highest release of oxidized and non-oxidized glucooligosaccharides from cellulose compared to monophenols or sulfur-containing compounds. In terms of biological role, lytic polysaccharide monooxygenase (LPMO) that depolymerizes crystalline and amorphous polysaccharides via the oxidation of scissile alpha- or beta-(1-4)-glycosidic bonds, yielding C4 oxidation products. Catalysis by LPMOs requires the reduction of the active-site copper from Cu(II) to Cu(I) by a reducing agent and H(2)O(2) or O(2) as a cosubstrate. Shows oxidative cleavage of beta-(1-3, 1-4)-glucan from oat spelt or xyloglucan from tamarind seed, in addition to cellulose. This chain is AA9 family lytic polysaccharide monooxygenase C, found in Thermothelomyces thermophilus (strain ATCC 42464 / BCRC 31852 / DSM 1799) (Sporotrichum thermophile).